The chain runs to 233 residues: Orotidine 5'-phosphate decarboxylase (233 aa).

Residues Asp-11, Lys-34, 61 to 70, Thr-117, Arg-179, Gln-188, Gly-208, and Arg-209 contribute to the substrate site; that span reads DLKLHDIPNT. Residue Lys-63 is the Proton donor of the active site.

Belongs to the OMP decarboxylase family. Type 1 subfamily. In terms of assembly, homodimer.

The enzyme catalyses orotidine 5'-phosphate + H(+) = UMP + CO2. Its pathway is pyrimidine metabolism; UMP biosynthesis via de novo pathway; UMP from orotate: step 2/2. Functionally, catalyzes the decarboxylation of orotidine 5'-monophosphate (OMP) to uridine 5'-monophosphate (UMP). The protein is Orotidine 5'-phosphate decarboxylase of Streptococcus pneumoniae (strain P1031).